The primary structure comprises 1015 residues: Probable beta-galactosidase B (1015 aa).

Residues 1-21 (MAHIYRLLLLLLSNLWFSAAA) form the signal peptide. A glycan (N-linked (GlcNAc...) asparagine) is linked at asparagine 23. Tyrosine 90 serves as a coordination point for substrate. Asparagine 100 is a glycosylation site (N-linked (GlcNAc...) asparagine). The substrate site is built by asparagine 135, alanine 136, and glutamate 137. A glycan (N-linked (GlcNAc...) asparagine) is linked at asparagine 172. Asparagine 195 is a substrate binding site. Glutamate 196 (proton donor) is an active-site residue. Residue asparagine 211 is glycosylated (N-linked (GlcNAc...) asparagine). Substrate is bound at residue tyrosine 265. Residues cysteine 271 and cysteine 324 are joined by a disulfide bond. Glutamate 308 serves as the catalytic Nucleophile. A substrate-binding site is contributed by tyrosine 373. Residues asparagine 411, asparagine 441, asparagine 456, asparagine 554, asparagine 679, asparagine 735, asparagine 775, asparagine 821, and asparagine 878 are each glycosylated (N-linked (GlcNAc...) asparagine).

Belongs to the glycosyl hydrolase 35 family.

It is found in the secreted. The enzyme catalyses Hydrolysis of terminal non-reducing beta-D-galactose residues in beta-D-galactosides.. Cleaves beta-linked terminal galactosyl residues from gangliosides, glycoproteins, and glycosaminoglycans. The polypeptide is Probable beta-galactosidase B (lacB) (Neosartorya fischeri (strain ATCC 1020 / DSM 3700 / CBS 544.65 / FGSC A1164 / JCM 1740 / NRRL 181 / WB 181) (Aspergillus fischerianus)).